The following is an 864-amino-acid chain: Leucine--tRNA ligase (864 aa).

Positions 42 to 52 (PYPSGKLHMGH) match the 'HIGH' region motif. Positions 624–628 (KMSKS) match the 'KMSKS' region motif. An ATP-binding site is contributed by Lys627.

The protein belongs to the class-I aminoacyl-tRNA synthetase family.

It localises to the cytoplasm. It catalyses the reaction tRNA(Leu) + L-leucine + ATP = L-leucyl-tRNA(Leu) + AMP + diphosphate. This is Leucine--tRNA ligase from Paraburkholderia phymatum (strain DSM 17167 / CIP 108236 / LMG 21445 / STM815) (Burkholderia phymatum).